Consider the following 319-residue polypeptide: tRNA-cytidine(32) 2-sulfurtransferase (319 aa).

A PP-loop motif motif is present at residues 43–48 (SGGKDS). Positions 118, 121, and 209 each coordinate [4Fe-4S] cluster. Positions 272-297 (DLAFDSEKMPERFSDGSEEDESEIKI) are disordered. Over residues 276 to 286 (DSEKMPERFSD) the composition is skewed to basic and acidic residues.

It belongs to the TtcA family. As to quaternary structure, homodimer. Mg(2+) is required as a cofactor. Requires [4Fe-4S] cluster as cofactor.

The protein localises to the cytoplasm. The enzyme catalyses cytidine(32) in tRNA + S-sulfanyl-L-cysteinyl-[cysteine desulfurase] + AH2 + ATP = 2-thiocytidine(32) in tRNA + L-cysteinyl-[cysteine desulfurase] + A + AMP + diphosphate + H(+). The protein operates within tRNA modification. Its function is as follows. Catalyzes the ATP-dependent 2-thiolation of cytidine in position 32 of tRNA, to form 2-thiocytidine (s(2)C32). The sulfur atoms are provided by the cysteine/cysteine desulfurase (IscS) system. In Neisseria gonorrhoeae (strain ATCC 700825 / FA 1090), this protein is tRNA-cytidine(32) 2-sulfurtransferase.